The following is a 623-amino-acid chain: Arginine decarboxylase 2 (623 aa).

Lys109 is modified (N6-(pyridoxal phosphate)lysine). Position 295–305 (295–305) interacts with substrate; the sequence is LDCGGGLGVDY.

It belongs to the Orn/Lys/Arg decarboxylase class-II family. SpeA subfamily. Requires pyridoxal 5'-phosphate as cofactor. Mg(2+) serves as cofactor. In terms of tissue distribution, expressed in stems (at protein level).

The catalysed reaction is L-arginine + H(+) = agmatine + CO2. It participates in amine and polyamine biosynthesis; agmatine biosynthesis; agmatine from L-arginine: step 1/1. This is Arginine decarboxylase 2 (ADC2) from Oryza sativa subsp. japonica (Rice).